The sequence spans 233 residues: Small ribosomal subunit protein uS3 (233 aa).

Residues 39–107 form the KH type-2 domain; that stretch reads VRQYLTKELA…PAQINIAEVR (69 aa).

The protein belongs to the universal ribosomal protein uS3 family. As to quaternary structure, part of the 30S ribosomal subunit. Forms a tight complex with proteins S10 and S14.

In terms of biological role, binds the lower part of the 30S subunit head. Binds mRNA in the 70S ribosome, positioning it for translation. In Citrobacter koseri (strain ATCC BAA-895 / CDC 4225-83 / SGSC4696), this protein is Small ribosomal subunit protein uS3.